A 296-amino-acid chain; its full sequence is Large ribosomal subunit protein uL15m (296 aa).

Residues 1-20 (MAASGGSGGKATELLRCLPR) constitute a mitochondrion transit peptide. Residues 25-66 (NLRPNPGARHREKRRGRGIHGGRKSGRGHKGETQRGNQPRLG) are disordered. Over residues 32 to 52 (ARHREKRRGRGIHGGRKSGRG) the composition is skewed to basic residues.

Belongs to the universal ribosomal protein uL15 family. In terms of assembly, component of the mitochondrial ribosome large subunit (39S) which comprises a 16S rRNA and about 50 distinct proteins.

The protein localises to the mitochondrion. This is Large ribosomal subunit protein uL15m (mrpl15) from Xenopus laevis (African clawed frog).